The sequence spans 344 residues: Centromere protein L (344 aa).

Residues 1–32 (MAGGRPAGSAIEMEGAMRTLPSSGRPSGTGWQ) form a disordered region. Positions 20-32 (LPSSGRPSGTGWQ) are enriched in polar residues.

Belongs to the CENP-L/IML3 family. In terms of assembly, component of the CENPA-HI complex, at least composed of CENPH, CENPI, CENPK, CENPL, CENPM, CENPO and CENPP.

Its subcellular location is the nucleus. The protein resides in the chromosome. The protein localises to the centromere. Component of the CENPA-HI complex, a centromeric complex involved in assembly of kinetochore proteins, mitotic progression and chromosome segregation. The sequence is that of Centromere protein L (CENPL) from Gallus gallus (Chicken).